Here is a 244-residue protein sequence, read N- to C-terminus: MKINFLILTTFIILTSLGFWQLSRLKEKKLFLDSIQSHIISPGINLEKVQENLLYHKVKITGQFLPNKDIYLYGIRLMAMEKDGYYLVTPFKTIADQVILVVRGWFSNRNKNIIMKATNNQIHEIIGVIMPSEKTLSYLPANDIKNNVWLTLDLKEASKALKLNLENFYIIAEGKDISNLDILLPLSLNHLALIKNDHLEYAITWFGLAIFLIVIYVIYRHSSNIPVPVNKQLKSLEQKNNQKN.

Helical transmembrane passes span 7 to 23 (ILTT…WQLS) and 201 to 219 (YAIT…YVIY).

This sequence belongs to the SURF1 family.

It localises to the cell membrane. In Rickettsia prowazekii (strain Madrid E), this protein is SURF1-like protein.